Consider the following 165-residue polypeptide: Transcriptional repressor NrdR (165 aa).

A zinc finger spans residues 3–34 (CPFCGAQDTRVVDSRLSHEGDQVRRRRECGEC). An ATP-cone domain is found at 49–139 (PRVVKSDGSR…VYRRFEDVNQ (91 aa)).

The protein belongs to the NrdR family. Zn(2+) serves as cofactor.

Functionally, negatively regulates transcription of bacterial ribonucleotide reductase nrd genes and operons by binding to NrdR-boxes. This chain is Transcriptional repressor NrdR, found in Methylococcus capsulatus (strain ATCC 33009 / NCIMB 11132 / Bath).